The following is a 70-amino-acid chain: Large ribosomal subunit protein bL31c (70 aa).

The protein belongs to the bacterial ribosomal protein bL31 family. Type A subfamily. In terms of assembly, part of the 50S ribosomal subunit.

Its subcellular location is the plastid. The protein resides in the chloroplast. In terms of biological role, binds the 23S rRNA. This is Large ribosomal subunit protein bL31c from Emiliania huxleyi (Coccolithophore).